Reading from the N-terminus, the 636-residue chain is Leucine-rich repeat and fibronectin type-III domain-containing protein 4 (636 aa).

The signal sequence occupies residues 1–16; the sequence is MAPPLLLLLLASGAAA. The region spanning 17–48 is the LRRNT domain; that stretch reads CPLPCVCQNLSESLSTLCAHRGLLFVPPNVDR. Residues 17–518 lie on the Extracellular side of the membrane; sequence CPLPCVCQNL…LQAHVLGGTL (502 aa). 2 N-linked (GlcNAc...) asparagine glycosylation sites follow: Asn25 and Asn70. 7 LRR repeats span residues 49–70, 73–94, 97–118, 121–142, 146–169, 170–191, and 194–215; these read RTVE…DFRN, GLVD…SFGD, SLRS…SLRG, NLQH…AFDD, SLED…GSMP, ALHT…VFAQ, and QLSR…PLFS. An LRRCT domain is found at 234 to 280; it reads NPLHCNCELLWLRRLARPDDLETCASPPTLAGRYFWAVPEGEFSCEP. Residues 281-367 enclose the Ig-like domain; sequence PLIARHTQRL…GEATARVELR (87 aa). Cys302 and Cys351 are joined by a disulfide. Asn324, Asn333, Asn376, and Asn440 each carry an N-linked (GlcNAc...) asparagine glycan. The Fibronectin type-III domain occupies 405–502; that stretch reads SEPAVQVTEV…GCAHFSTLPA (98 aa). The chain crosses the membrane as a helical span at residues 519–539; the sequence is TVAVGGVLVAALLVFTVALLV. The Cytoplasmic segment spans residues 540-636; the sequence is RGRGAGNGRL…SAERLEESVV (97 aa). The tract at residues 556 to 585 is disordered; it reads VQSQTNGGTSPMPKSHPPRSPPPRPQRSCS. Positions 569–580 are enriched in pro residues; the sequence is KSHPPRSPPPRP. 2 positions are modified to phosphoserine: Ser585 and Ser627. Positions 633–636 match the PDZ-binding motif; sequence ESVV.

The protein belongs to the LRFN family. Can form heteromeric complexes with LRFN1, LRFN2, LRFN3 and LRFN5. Unable to form homophilic interactions across cell junctions. Interacts with DLG1, DLG2 and DLG3. Also interacts with DLG4. Post-translationally, glycosylated. In terms of tissue distribution, expressed in brain and testis. In the brain, weak, but broad expression in the cerebral cortex and diencephalic nuclei. Also detected in other parts of the central nervous system, including the olfactory bulb, pons, cerebellum, and medulla oblongata, as well as in the peripheral nervous system, such as the ganglia of cranial nerves and the dorsal root ganglion during gestation.

The protein resides in the membrane. In terms of biological role, promotes neurite outgrowth in hippocampal neurons. May play a role in redistributing DLG4 to the cell periphery. The protein is Leucine-rich repeat and fibronectin type-III domain-containing protein 4 (Lrfn4) of Mus musculus (Mouse).